The chain runs to 165 residues: UPF0254 protein MmarC5_0742 (165 aa).

It belongs to the UPF0254 family.

This is UPF0254 protein MmarC5_0742 from Methanococcus maripaludis (strain C5 / ATCC BAA-1333).